Reading from the N-terminus, the 246-residue chain is Type III pantothenate kinase (246 aa).

An ATP-binding site is contributed by 11–18; the sequence is DIGNSFIK. Substrate is bound by residues Tyr-95 and 102–105; that span reads GVDR. Catalysis depends on Asp-104, which acts as the Proton acceptor. Position 125 (Asp-125) interacts with K(+). An ATP-binding site is contributed by Thr-128. Thr-179 contacts substrate.

This sequence belongs to the type III pantothenate kinase family. Homodimer. The cofactor is NH4(+). Requires K(+) as cofactor.

The protein localises to the cytoplasm. The catalysed reaction is (R)-pantothenate + ATP = (R)-4'-phosphopantothenate + ADP + H(+). It participates in cofactor biosynthesis; coenzyme A biosynthesis; CoA from (R)-pantothenate: step 1/5. Catalyzes the phosphorylation of pantothenate (Pan), the first step in CoA biosynthesis. This is Type III pantothenate kinase from Pseudoalteromonas atlantica (strain T6c / ATCC BAA-1087).